The primary structure comprises 173 residues: Cyclic pyranopterin monophosphate synthase (173 aa).

Residues 75–77 and 117–118 each bind substrate; these read MCH and ME. Asp-132 is a catalytic residue. Residues 152-173 are disordered; it reads SGGKSGHYQRENSSVGGFANEQ. Residues 162–173 show a composition bias toward polar residues; the sequence is ENSSVGGFANEQ.

It belongs to the MoaC family. Homohexamer; trimer of dimers.

The enzyme catalyses (8S)-3',8-cyclo-7,8-dihydroguanosine 5'-triphosphate = cyclic pyranopterin phosphate + diphosphate. Its pathway is cofactor biosynthesis; molybdopterin biosynthesis. Functionally, catalyzes the conversion of (8S)-3',8-cyclo-7,8-dihydroguanosine 5'-triphosphate to cyclic pyranopterin monophosphate (cPMP). The protein is Cyclic pyranopterin monophosphate synthase of Geobacillus sp. (strain WCH70).